Consider the following 119-residue polypeptide: Large ribosomal subunit protein bL20 (119 aa).

Belongs to the bacterial ribosomal protein bL20 family.

Its function is as follows. Binds directly to 23S ribosomal RNA and is necessary for the in vitro assembly process of the 50S ribosomal subunit. It is not involved in the protein synthesizing functions of that subunit. The protein is Large ribosomal subunit protein bL20 of Xylella fastidiosa (strain M23).